A 595-amino-acid chain; its full sequence is Probable Xaa-Pro aminopeptidase CHGG_02942 (595 aa).

Positions 51-76 are disordered; the sequence is KSGPSSSNLSPSTLSTEKTSSDSSGV. A compositionally biased stretch (low complexity) spans 52–66; that stretch reads SGPSSSNLSPSTLST. D334, D345, E541, and E563 together coordinate Mn(2+).

Belongs to the peptidase M24B family. The cofactor is Mn(2+).

It catalyses the reaction Release of any N-terminal amino acid, including proline, that is linked to proline, even from a dipeptide or tripeptide.. Functionally, catalyzes the removal of a penultimate prolyl residue from the N-termini of peptides. The chain is Probable Xaa-Pro aminopeptidase CHGG_02942 from Chaetomium globosum (strain ATCC 6205 / CBS 148.51 / DSM 1962 / NBRC 6347 / NRRL 1970) (Soil fungus).